Reading from the N-terminus, the 411-residue chain is LIM domain-binding protein 1 (411 aa).

Position 2 is an N-acetylserine (S2). Position 61 is a phosphothreonine (T61). S265 and S302 each carry phosphoserine. 2 disordered regions span residues A283 to L330 and D367 to Q411. Residues S302–N318 are compositionally biased toward low complexity. Residues D336–E375 form the LIM interaction domain (LID) domain.

It belongs to the LDB family. In terms of assembly, interacts with ESR1. Forms homodimers and heterodimers. Interacts with and activates LHX1/LIM1. Interacts with the LIM domains of ISL1 and LMO2. Can assemble in a complex with LMO2 and TAL1/SCL but does not interact with TAL1/SCL directly. Strongly interacts with the LIM2 domain of LMX1A and more weakly with the LIM1 domain. Homodimerization is not required for, and does not effect, LMX1A-binding. Component of a nuclear TAL-1 complex composed at least of CBFA2T3, LDB1, TAL1 and TCF3. Interacts with LHX6 and LHX9. At neuronal promoters, forms a complex with LHX3 involved in the specification of interneurons, in motor neurons, it is displaced by ISL1 to form a ternary complex in which ISL1 contacts both LHX3 and LDB1. Interacts with SLK; leading to negatively regulate SLK kinase activity. Interacts with YWHAZ. Interacts with PRDM1/BLIMP1. Interacts with LMO4. Interacts with RLIM/RNF12; the interaction inhibits the ubiquitination of LMO proteins. Ubiquitinated by RLIM/RNF12, leading to its degradation by the proteasome. As to expression, expressed in a wide range of adult tissues including brain, heart, skeletal muscle, colon, thymus, spleen, kidney, liver, small intestine, lung and peripheral blood leukocytes.

It is found in the nucleus. Binds to the LIM domain of a wide variety of LIM domain-containing transcription factors. May regulate the transcriptional activity of LIM-containing proteins by determining specific partner interactions. Plays a role in the development of interneurons and motor neurons in cooperation with LHX3 and ISL1. Acts synergistically with LHX1/LIM1 in axis formation and activation of gene expression. Acts with LMO2 in the regulation of red blood cell development, maintaining erythroid precursors in an immature state. The polypeptide is LIM domain-binding protein 1 (LDB1) (Homo sapiens (Human)).